Reading from the N-terminus, the 367-residue chain is WD repeat-containing protein 31 (367 aa).

7 WD repeats span residues 53-90 (AFQEYSPAHMDTVSVVAALNSDLCVSGGKDKTVVAYNW), 94-132 (NVVKRFKGHEHEITKVACIPKSSQFFSASRDRMVMMWDL), 137-175 (QPRQQLCGHAMVVTGLAVSPDSSQLCTGSRDNTLLLWDV), 179-217 (QSVERASVSRNVVTHLCWVPREPYILQTSEDKTLRLWDS), 221-264 (QVAH…LWDL), 269-311 (NRIC…IWNQ), and 315-353 (ACLFTLSLDGSGPLTSLAVGDAISLLCASFNRGIHLLRM).

The chain is WD repeat-containing protein 31 (WDR31) from Homo sapiens (Human).